The chain runs to 359 residues: MVTSNQLGFARLLMQLCVKNVQSFFLALLRWLSMQVSGAHVQQTPARKISRPESRTSKQKEGSRAPFTTPSSVNYHFTRQCNYKCGFCFHTAKTSFVLPIEEAKRGLRLLKEAGMEKINFSGGEPFVHQKGSFLGELVLYCKQELQLPSVSIVSNGSLIRESWFQKYGDYLDILAISCDSFIEETNQLIGRAQGRKSHLDNLHKVRNWCREYKVAFKINSVINTYNVEEDMTEQITALNPVRWKVFQCLLIEGENAGENSLREAEKFVISDQQFQDFLERHQSIQCLVPESNQKMRDSYLILDEYMRFLDCREGRKDPSKSILDVGVEEAIKFSGFDEKMFLMRGGKYVWSKADMKLEW.

Residues 43 to 67 (QTPARKISRPESRTSKQKEGSRAPF) are disordered. Residues 50 to 63 (SRPESRTSKQKEGS) are compositionally biased toward basic and acidic residues. The Radical SAM core domain maps to 67-287 (FTTPSSVNYH…LERHQSIQCL (221 aa)). 3 residues coordinate [4Fe-4S] cluster: Cys81, Cys85, and Cys88.

It belongs to the radical SAM superfamily. RSAD2 family. Requires [4Fe-4S] cluster as cofactor.

Its subcellular location is the endoplasmic reticulum membrane. Functionally, interferon-inducible iron-sulfur (4FE-4S) cluster-binding antiviral protein which plays a major role in the cell antiviral state induced by type I and type II interferon. This chain is S-adenosylmethionine-dependent nucleotide dehydratase RSAD2, found in Danio rerio (Zebrafish).